Here is a 287-residue protein sequence, read N- to C-terminus: Inorganic pyrophosphatase (287 aa).

Arginine 79 contacts diphosphate. Positions 116, 121, and 153 each coordinate Mg(2+).

The protein belongs to the PPase family. Mg(2+) serves as cofactor.

Its subcellular location is the cytoplasm. It carries out the reaction diphosphate + H2O = 2 phosphate + H(+). This chain is Inorganic pyrophosphatase (IPP1), found in Debaryomyces hansenii (strain ATCC 36239 / CBS 767 / BCRC 21394 / JCM 1990 / NBRC 0083 / IGC 2968) (Yeast).